The chain runs to 466 residues: Ribulose bisphosphate carboxylase large chain (466 aa).

Residue K4 is modified to N6,N6,N6-trimethyllysine. Substrate-binding residues include N113 and T163. The active-site Proton acceptor is the K165. K167 is a substrate binding site. Positions 191, 193, and 194 each coordinate Mg(2+). Position 191 is an N6-carboxylysine (K191). H284 functions as the Proton acceptor in the catalytic mechanism. R285, H317, and S369 together coordinate substrate.

It belongs to the RuBisCO large chain family. Type I subfamily. As to quaternary structure, heterohexadecamer of 8 large chains and 8 small chains; disulfide-linked. The disulfide link is formed within the large subunit homodimers. It depends on Mg(2+) as a cofactor. Post-translationally, the disulfide bond which can form in the large chain dimeric partners within the hexadecamer appears to be associated with oxidative stress and protein turnover.

The protein resides in the plastid. The protein localises to the chloroplast. The catalysed reaction is 2 (2R)-3-phosphoglycerate + 2 H(+) = D-ribulose 1,5-bisphosphate + CO2 + H2O. It catalyses the reaction D-ribulose 1,5-bisphosphate + O2 = 2-phosphoglycolate + (2R)-3-phosphoglycerate + 2 H(+). Functionally, ruBisCO catalyzes two reactions: the carboxylation of D-ribulose 1,5-bisphosphate, the primary event in carbon dioxide fixation, as well as the oxidative fragmentation of the pentose substrate in the photorespiration process. Both reactions occur simultaneously and in competition at the same active site. The polypeptide is Ribulose bisphosphate carboxylase large chain (Pinguicula caerulea (Blueflower butterwort)).